The following is a 227-amino-acid chain: Isopentenyl-diphosphate delta-isomerase 2 (227 aa).

Lys-36 provides a ligand contact to substrate. The Mg(2+) site is built by His-40 and His-51. The region spanning 49–199 is the Nudix hydrolase domain; sequence LLHRAFSVVL…EVKVTPWLRT (151 aa). Residues Arg-70 and Lys-74 each coordinate substrate. Residue Ser-86 is part of the active site. Ser-87 provides a ligand contact to substrate. Glu-146 and Glu-148 together coordinate Mg(2+). Glu-148 is an active-site residue. The Microbody targeting signal motif lies at 225–227; it reads HRV.

It belongs to the IPP isomerase type 1 family. The cofactor is Mg(2+). In terms of tissue distribution, muscle-specific expression.

Its subcellular location is the peroxisome. The enzyme catalyses isopentenyl diphosphate = dimethylallyl diphosphate. The protein operates within isoprenoid biosynthesis; dimethylallyl diphosphate biosynthesis; dimethylallyl diphosphate from isopentenyl diphosphate: step 1/1. Functionally, catalyzes the 1,3-allylic rearrangement of the homoallylic substrate isopentenyl (IPP) to its highly electrophilic allylic isomer, dimethylallyl diphosphate (DMAPP). In Homo sapiens (Human), this protein is Isopentenyl-diphosphate delta-isomerase 2 (IDI2).